Reading from the N-terminus, the 181-residue chain is Putative manganese efflux pump MntP (181 aa).

The next 6 membrane-spanning stretches (helical) occupy residues Val-4–Ala-24, Val-31–Ile-51, Met-59–Ala-79, Val-102–Thr-122, Leu-129–Ile-149, and Ala-161–Val-181.

It belongs to the MntP (TC 9.B.29) family.

Its subcellular location is the cell inner membrane. Probably functions as a manganese efflux pump. This is Putative manganese efflux pump MntP from Saccharophagus degradans (strain 2-40 / ATCC 43961 / DSM 17024).